The primary structure comprises 504 residues: Anaerobic nitric oxide reductase transcription regulator NorR (504 aa).

The residue at position 57 (D57) is a 4-aspartylphosphate. The Sigma-54 factor interaction domain occupies 187–416 (MIGLSPGMTQ…LEHAIHRAVV (230 aa)). ATP contacts are provided by residues 215 to 222 (GETGTGKE) and 278 to 287 (ADNGTLFLDE). Residues 479 to 498 (WAASARMLETDVANLHRLAK) constitute a DNA-binding region (H-T-H motif).

It functions in the pathway nitrogen metabolism; nitric oxide reduction. Functionally, required for the expression of anaerobic nitric oxide (NO) reductase, acts as a transcriptional activator for at least the norVW operon. Activation also requires sigma-54. The protein is Anaerobic nitric oxide reductase transcription regulator NorR of Escherichia coli (strain SMS-3-5 / SECEC).